The following is a 56-amino-acid chain: Large ribosomal subunit protein bL33A (56 aa).

Belongs to the bacterial ribosomal protein bL33 family.

In Cutibacterium acnes (strain DSM 16379 / KPA171202) (Propionibacterium acnes), this protein is Large ribosomal subunit protein bL33A.